The sequence spans 531 residues: PHD finger protein 21B (531 aa).

Disordered regions lie at residues 79–99 (PDSLPVAPGRDRPPKQPPTFQ), 184–222 (SADNKPPPRLLSSPHPATHHCPLHPSSLPLTPPSPSLSP), 238–277 (VQTQPESTAESRPPTEEPSQGAQATKKKKEDRPPTQENPE), and 295–314 (EIQSKRQERKRRSTANPAYS). A compositionally biased stretch (basic and acidic residues) spans 265-277 (KKEDRPPTQENPE). The segment at 352–399 (DEHCAACKRGANLQPCGTCPGAYHLSCLEPPLKTAPKGVWVCPRCQQK) adopts a PHD-type zinc-finger fold. Residues 423 to 465 (KTVKEEEKQKLLQRGSELQNEHQQLEERDRRLASAVQKCLELK) are a coiled coil. The tract at residues 507 to 531 (LLAGPWTKPSVAATHPTVQHPQGHN) is disordered. Over residues 522-531 (PTVQHPQGHN) the composition is skewed to polar residues.

In Homo sapiens (Human), this protein is PHD finger protein 21B (PHF21B).